The sequence spans 561 residues: Cytochrome P450 monooxygenase iboC (561 aa).

A helical transmembrane segment spans residues 8 to 28 (RFYYQLLAAVLIPALFVAWAA). A heme-binding site is contributed by Cys484.

This sequence belongs to the cytochrome P450 family. Heme serves as cofactor.

It localises to the membrane. It functions in the pathway secondary metabolite biosynthesis. In terms of biological role, cytochrome P450 monooxygenase; part of the gene cluster that mediates the biosynthesis of the psychoactive metabolites ibotenic acid and muscimol. The first committed step is glutamate hydroxylation by the 2-oxoglutarate-dependent dioxygenase iboH, and the last step is decarboxylation of ibotenic acid to muscimol by the decarboxylase iboD. The order of the intermediate reactions is somewhat ambiguous. IboA likely activates the carboxylic acid at position 5 to introduce an amide bond, and the flavin monooxygenase iboF generates the N-O bond. There are several options for the latter step. One option is that iboF directly hydroxylates the amide nitrogen formed by iboA to produce a hydroxamic acid species. Another option is that iboF hydroxylates an external N-containing compound, whose resulting N-O bond is subsequently introduced into the hydroxyglutamate scaffold. The paralogous PLP-dependent cystathionine gamma-synthase-like enzymes iboG1 and iboG2 are likely involved in substitution of the OH group at position 3 by the O-N moiety. The first cyclic intermediate is most probably tricholomic acid which is likely desaturated to ibotenic acid by the cytochrome P450 monooxygenase iboC. This is Cytochrome P450 monooxygenase iboC from Amanita muscaria (strain Koide BX008).